The following is a 116-amino-acid chain: Iron-sulfur cluster insertion protein ErpA (116 aa).

The iron-sulfur cluster site is built by cysteine 44, cysteine 108, and cysteine 110.

The protein belongs to the HesB/IscA family. Homodimer. The cofactor is iron-sulfur cluster.

In terms of biological role, required for insertion of 4Fe-4S clusters for at least IspG. This is Iron-sulfur cluster insertion protein ErpA from Ectopseudomonas mendocina (strain ymp) (Pseudomonas mendocina).